The primary structure comprises 116 residues: Large ribosomal subunit protein bL19 (116 aa).

The protein belongs to the bacterial ribosomal protein bL19 family.

Its function is as follows. This protein is located at the 30S-50S ribosomal subunit interface and may play a role in the structure and function of the aminoacyl-tRNA binding site. This is Large ribosomal subunit protein bL19 from Staphylococcus haemolyticus (strain JCSC1435).